A 95-amino-acid polypeptide reads, in one-letter code: Aspartyl/glutamyl-tRNA(Asn/Gln) amidotransferase subunit C (95 aa).

The protein belongs to the GatC family. Heterotrimer of A, B and C subunits.

It carries out the reaction L-glutamyl-tRNA(Gln) + L-glutamine + ATP + H2O = L-glutaminyl-tRNA(Gln) + L-glutamate + ADP + phosphate + H(+). The enzyme catalyses L-aspartyl-tRNA(Asn) + L-glutamine + ATP + H2O = L-asparaginyl-tRNA(Asn) + L-glutamate + ADP + phosphate + 2 H(+). Functionally, allows the formation of correctly charged Asn-tRNA(Asn) or Gln-tRNA(Gln) through the transamidation of misacylated Asp-tRNA(Asn) or Glu-tRNA(Gln) in organisms which lack either or both of asparaginyl-tRNA or glutaminyl-tRNA synthetases. The reaction takes place in the presence of glutamine and ATP through an activated phospho-Asp-tRNA(Asn) or phospho-Glu-tRNA(Gln). The protein is Aspartyl/glutamyl-tRNA(Asn/Gln) amidotransferase subunit C of Geobacter metallireducens (strain ATCC 53774 / DSM 7210 / GS-15).